The following is a 267-amino-acid chain: Regulatory protein RecX (267 aa).

Belongs to the RecX family.

The protein resides in the cytoplasm. Functionally, modulates RecA activity. This Staphylococcus haemolyticus (strain JCSC1435) protein is Regulatory protein RecX.